The chain runs to 460 residues: Serine hydroxymethyltransferase, cytosolic (460 aa).

N6-(pyridoxal phosphate)lysine is present on Lys244.

Belongs to the SHMT family. As to quaternary structure, homotetramer. The cofactor is pyridoxal 5'-phosphate.

It is found in the cytoplasm. It carries out the reaction (6R)-5,10-methylene-5,6,7,8-tetrahydrofolate + glycine + H2O = (6S)-5,6,7,8-tetrahydrofolate + L-serine. It functions in the pathway one-carbon metabolism; tetrahydrofolate interconversion. Interconversion of serine and glycine. The polypeptide is Serine hydroxymethyltransferase, cytosolic (SHMT-1) (Encephalitozoon cuniculi (strain GB-M1) (Microsporidian parasite)).